The primary structure comprises 306 residues: Galactosylgalactosylxylosylprotein 3-beta-glucuronosyltransferase I (306 aa).

Residues Met-1–Val-11 are Cytoplasmic-facing. A helical; Signal-anchor for type II membrane protein transmembrane segment spans residues Leu-12 to Gly-29. Residues Lys-30–Val-306 lie on the Lumenal side of the membrane. N-linked (GlcNAc...) asparagine glycosylation is present at Asn-90. Asp-163 lines the Mn(2+) pocket. The Proton acceptor role is filled by Glu-252.

This sequence belongs to the glycosyltransferase 43 family. It depends on Mn(2+) as a cofactor.

It localises to the golgi apparatus membrane. The catalysed reaction is 3-O-(beta-D-galactosyl-(1-&gt;3)-beta-D-galactosyl-(1-&gt;4)-beta-D-xylosyl)-L-seryl-[protein] + UDP-alpha-D-glucuronate = 3-O-(beta-D-GlcA-(1-&gt;3)-beta-D-Gal-(1-&gt;3)-beta-D-Gal-(1-&gt;4)-beta-D-Xyl)-L-seryl-[protein] + UDP + H(+). It participates in protein modification; protein glycosylation. Involved in the biosynthesis of L2/HNK-1 carbohydrate epitope on both glycolipids and glycoproteins. Shows strict specificity for Gal-beta-1,3-Gal-beta-1,4-Xyl, exhibiting negligible incorporation into other galactoside substrates. This is Galactosylgalactosylxylosylprotein 3-beta-glucuronosyltransferase I (GlcAT-I) from Drosophila melanogaster (Fruit fly).